Reading from the N-terminus, the 82-residue chain is uncharacterized protein (82 aa).

This is an uncharacterized protein from Autographa californica nuclear polyhedrosis virus (AcMNPV).